We begin with the raw amino-acid sequence, 440 residues long: Xylose isomerase (440 aa).

Residues His100 and Asp103 contribute to the active site. The Mg(2+) site is built by Glu231, Glu267, His270, Asp295, Asp306, Asp308, and Asp338.

It belongs to the xylose isomerase family. Homotetramer. It depends on Mg(2+) as a cofactor.

Its subcellular location is the cytoplasm. The catalysed reaction is alpha-D-xylose = alpha-D-xylulofuranose. In Burkholderia cenocepacia (strain ATCC BAA-245 / DSM 16553 / LMG 16656 / NCTC 13227 / J2315 / CF5610) (Burkholderia cepacia (strain J2315)), this protein is Xylose isomerase.